Here is a 171-residue protein sequence, read N- to C-terminus: LIM domain transcription factor LMO4-B (171 aa).

Polar residues predominate over residues 1-19; sequence MVNNRISESTTTAVSNNGS. The interval 1 to 20 is disordered; the sequence is MVNNRISESTTTAVSNNGSP. LIM zinc-binding domains lie at 22–84 and 86–148; these read KACA…LFGN and GACN…GLLN.

Its function is as follows. Acts as a positive cofactor of GATA transcription factors to establish the identity of the ventral mesoderm during gastrulation. Down-regulation in the dorsal mesoderm is necessary for the proper formation of this territory since, when present, lmo4 may bind ldb1 and restrict the availability of this cofactor for Spemman organizer transcription factors. At neurula stages, suppresses primary neuron differentiation and modulates gene expression at the Isthmic Organizer of the midbrain-hindbrain boundary. This chain is LIM domain transcription factor LMO4-B (lmo4-b), found in Xenopus laevis (African clawed frog).